The following is a 602-amino-acid chain: mRNA-decapping enzyme 1A (602 aa).

A Phosphoserine modification is found at Ser82. Residues 152–161 (RSQQAARDKQ) are compositionally biased toward basic and acidic residues. Disordered stretches follow at residues 152 to 174 (RSQQ…DQRP), 191 to 234 (NQMG…PSGH), and 267 to 291 (GDAS…APQS). Residues Ser162, Ser199, and Ser200 each carry the phosphoserine modification. Positions 193–229 (MGGSNISSPGLQPSTQLSNLGSTETLEETPSGSQDKS) are enriched in polar residues. Phosphoserine is present on residues Ser335 and Ser339. At Thr367 the chain carries Phosphothreonine. Ser372 is subject to Phosphoserine. Arg395 is subject to Asymmetric dimethylarginine. Residue Thr420 is modified to Phosphothreonine. Residues Ser441, Ser542, Ser543, and Ser545 each carry the phosphoserine modification. Residues Thr548 and Thr551 each carry the phosphothreonine modification.

This sequence belongs to the DCP1 family. As to quaternary structure, forms a complex with EDC3, DCP2, DDX6 and EDC4/HEDLS, within this complex directly interacts with EDC3. Part of a cytoplasmic complex containing proteins involved in mRNA decay, including XRN1 and LSM1. Interacts with DCP1B. Interacts with DCP2. Interacts with DDX17 in an RNA-independent manner. Interacts with PNRC2. Interacts with SMAD4. Interacts with UPF1. Interacts with ZC3HAV1. Interacts with ZFP36L1. Interacts with NBDY. Interacts with DHX34; the interaction is RNA-independent. In terms of tissue distribution, ubiquitous, with highest expression in the spleen and testis (at protein level).

The protein localises to the cytoplasm. It is found in the P-body. It localises to the nucleus. The catalysed reaction is a 5'-end (N(7)-methyl 5'-triphosphoguanosine)-ribonucleoside in mRNA + H2O = N(7)-methyl-GDP + a 5'-end phospho-ribonucleoside in mRNA + 2 H(+). Necessary for the degradation of mRNAs, both in normal mRNA turnover and in nonsense-mediated mRNA decay. Removes the 7-methyl guanine cap structure from mRNA molecules, yielding a 5'-phosphorylated mRNA fragment and 7m-GDP. Contributes to the transactivation of target genes after stimulation by TGFB1. Essential for embryonic development. This Mus musculus (Mouse) protein is mRNA-decapping enzyme 1A (Dcp1a).